A 122-amino-acid polypeptide reads, in one-letter code: UPF0145 protein BceJ2315_57450 (122 aa).

It belongs to the UPF0145 family.

The chain is UPF0145 protein BceJ2315_57450 from Burkholderia cenocepacia (strain ATCC BAA-245 / DSM 16553 / LMG 16656 / NCTC 13227 / J2315 / CF5610) (Burkholderia cepacia (strain J2315)).